The sequence spans 232 residues: 2-C-methyl-D-erythritol 4-phosphate cytidylyltransferase (232 aa).

The protein belongs to the IspD/TarI cytidylyltransferase family. IspD subfamily.

The catalysed reaction is 2-C-methyl-D-erythritol 4-phosphate + CTP + H(+) = 4-CDP-2-C-methyl-D-erythritol + diphosphate. It participates in isoprenoid biosynthesis; isopentenyl diphosphate biosynthesis via DXP pathway; isopentenyl diphosphate from 1-deoxy-D-xylulose 5-phosphate: step 2/6. Its function is as follows. Catalyzes the formation of 4-diphosphocytidyl-2-C-methyl-D-erythritol from CTP and 2-C-methyl-D-erythritol 4-phosphate (MEP). This is 2-C-methyl-D-erythritol 4-phosphate cytidylyltransferase from Synechococcus elongatus (strain ATCC 33912 / PCC 7942 / FACHB-805) (Anacystis nidulans R2).